The following is an 862-amino-acid chain: DNA mismatch repair protein MutS (862 aa).

ATP is bound at residue 608–615 (GPNMAGKS).

This sequence belongs to the DNA mismatch repair MutS family.

Functionally, this protein is involved in the repair of mismatches in DNA. It is possible that it carries out the mismatch recognition step. This protein has a weak ATPase activity. In Bacteroides thetaiotaomicron (strain ATCC 29148 / DSM 2079 / JCM 5827 / CCUG 10774 / NCTC 10582 / VPI-5482 / E50), this protein is DNA mismatch repair protein MutS.